The primary structure comprises 224 residues: MPWSPLAALSWALVLRLLALLWPPGRGEACSCAPAHPQQHVCHSALVIRAKISSEKVVPASEDPADTQKMIRYEIKQIKMFKGFEKAKDIQYVYTPFDSSLCGVKLETNSQKQYLLTGQILSDGKVFIHLCNYIEPWEDLSLVQRESLNHHYHQNCGCQITTCYAVPCTISAPDECLWTDWLLERKLYGYQAQHYVCMKHVDGICSWYRGHLHLRKEYVDIVQP.

The N-terminal stretch at 1-29 is a signal peptide; that stretch reads MPWSPLAALSWALVLRLLALLWPPGRGEA. C30 lines the Zn(2+) pocket. Involved in metalloproteinase-binding stretches follow at residues 30–33 and 99–100; these read CSCA and SS. 6 cysteine pairs are disulfide-bonded: C30-C102, C32-C131, C42-C156, C158-C205, C163-C168, and C176-C197. The NTR domain occupies 30 to 156; sequence CSCAPAHPQQ…SLNHHYHQNC (127 aa).

Belongs to the protease inhibitor I35 (TIMP) family. As to expression, expressed in retina, smooth muscle, skin, pancreas, skeletal muscle, heart, brain, lung, kidney and testis. Not found in cartilage, spleen and liver.

The protein resides in the secreted. Functionally, complexes with metalloproteinases (such as collagenases) and irreversibly inactivates them by binding to their catalytic zinc cofactor. The protein is Metalloproteinase inhibitor 4 (Timp4) of Rattus norvegicus (Rat).